Consider the following 300-residue polypeptide: MEGNIVSGKAVADNITNILATCISDLKVQHNLTPCLIVVLVGDDPASQLYVRNKQRKAEMLGLRSETMLLPSTISESSLIEKIHQLNNDDSVHGILVQLPVPRHIDKNLIINTIDPKKDVDGFHNENVGRLFTGQKKNCLVPCTPQGCLYLIKTITRNLSGSDAVVIGRSNIVGKPMACLLLGENCTVTTVHSATRDLPDYCRRADILVAAVGIPRFVKYSWVKHGAIVIDVGINSIEEDGVKKFVGDVDFAEVNKIASAITPVPGGVGPMTIAFLMVNTIIAACNQSGIHGFLEKYLDL.

NADP(+) is bound by residues 168–170 (GRS), serine 193, and isoleucine 234.

Belongs to the tetrahydrofolate dehydrogenase/cyclohydrolase family. As to quaternary structure, homodimer.

The catalysed reaction is (6R)-5,10-methylene-5,6,7,8-tetrahydrofolate + NADP(+) = (6R)-5,10-methenyltetrahydrofolate + NADPH. The enzyme catalyses (6R)-5,10-methenyltetrahydrofolate + H2O = (6R)-10-formyltetrahydrofolate + H(+). It functions in the pathway one-carbon metabolism; tetrahydrofolate interconversion. In terms of biological role, catalyzes the oxidation of 5,10-methylenetetrahydrofolate to 5,10-methenyltetrahydrofolate and then the hydrolysis of 5,10-methenyltetrahydrofolate to 10-formyltetrahydrofolate. This chain is Bifunctional protein FolD, found in Ehrlichia ruminantium (strain Gardel).